The sequence spans 592 residues: Ferric-chelate reductase 1 (592 aa).

A helical transmembrane segment spans residues 2–22 (AVSGFTLGTCILLLHISYVAN). In terms of domain architecture, Reelin spans 13-179 (LLLHISYVAN…FTTPKATVVP (167 aa)). Residues N138, N308, and N321 are each glycosylated (N-linked (GlcNAc...) asparagine). The DOMON domain occupies 216-331 (EASCVFLSFT…TSYYIFLADG (116 aa)). The region spanning 335–534 (DGRIYKHSQQ…VGTEVVLEVH (200 aa)) is the Cytochrome b561 domain. A helical transmembrane segment spans residues 372–392 (VHGALMFVAWMTTVSIGVLVA). Positions 373 and 414 each coordinate heme b. Helical transmembrane passes span 415–435 (RMLM…PFIY) and 446–466 (HPYL…LAVF). Heme b-binding residues include H446 and H482. A run of 3 helical transmembrane segments spans residues 491–511 (IIAV…LPDS), 515–535 (YAMT…EVHA), and 569–589 (AVLA…LSAI).

Belongs to the FRRS1 family. Requires heme b as cofactor.

Its subcellular location is the membrane. Its function is as follows. Ferric-chelate reductases reduce Fe(3+) to Fe(2+) before its transport from the endosome to the cytoplasm. The chain is Ferric-chelate reductase 1 (FRRS1) from Homo sapiens (Human).